Reading from the N-terminus, the 121-residue chain is Large ribosomal subunit protein uL22c (121 aa).

The protein belongs to the universal ribosomal protein uL22 family. In terms of assembly, part of the 50S ribosomal subunit.

The protein resides in the plastid. It is found in the chloroplast. In terms of biological role, this protein binds specifically to 23S rRNA. Its function is as follows. The globular domain of the protein is located near the polypeptide exit tunnel on the outside of the subunit, while an extended beta-hairpin is found that lines the wall of the exit tunnel in the center of the 70S ribosome. This is Large ribosomal subunit protein uL22c (rpl22) from Welwitschia mirabilis (Tree tumbo).